The primary structure comprises 82 residues: Sec-independent protein translocase protein TatA (82 aa).

The helical transmembrane segment at 1-21 (MGIFDWKHWIVILIVVVLVFG) threads the bilayer. Residues 43 to 82 (VNTEEDDKKEQPAAQPAQPLNQPHTIDAQAQKVEEPARKD) are disordered.

It belongs to the TatA/E family. In terms of assembly, the Tat system comprises two distinct complexes: a TatABC complex, containing multiple copies of TatA, TatB and TatC subunits, and a separate TatA complex, containing only TatA subunits. Substrates initially bind to the TatABC complex, which probably triggers association of the separate TatA complex to form the active translocon.

The protein localises to the cell inner membrane. In terms of biological role, part of the twin-arginine translocation (Tat) system that transports large folded proteins containing a characteristic twin-arginine motif in their signal peptide across membranes. TatA could form the protein-conducting channel of the Tat system. This chain is Sec-independent protein translocase protein TatA, found in Pseudomonas paraeruginosa (strain DSM 24068 / PA7) (Pseudomonas aeruginosa (strain PA7)).